We begin with the raw amino-acid sequence, 938 residues long: Isoleucine--tRNA ligase (938 aa).

A 'HIGH' region motif is present at residues 58–68; that stretch reads PYANGNIHIGH. L-isoleucyl-5'-AMP is bound at residue glutamate 562. Residues 603-607 carry the 'KMSKS' region motif; that stretch reads KMSKS. Residue lysine 606 participates in ATP binding. Zn(2+) is bound by residues cysteine 901, cysteine 904, cysteine 921, and cysteine 924.

Belongs to the class-I aminoacyl-tRNA synthetase family. IleS type 1 subfamily. As to quaternary structure, monomer. Zn(2+) serves as cofactor.

It is found in the cytoplasm. It carries out the reaction tRNA(Ile) + L-isoleucine + ATP = L-isoleucyl-tRNA(Ile) + AMP + diphosphate. Functionally, catalyzes the attachment of isoleucine to tRNA(Ile). As IleRS can inadvertently accommodate and process structurally similar amino acids such as valine, to avoid such errors it has two additional distinct tRNA(Ile)-dependent editing activities. One activity is designated as 'pretransfer' editing and involves the hydrolysis of activated Val-AMP. The other activity is designated 'posttransfer' editing and involves deacylation of mischarged Val-tRNA(Ile). The protein is Isoleucine--tRNA ligase of Actinobacillus pleuropneumoniae serotype 7 (strain AP76).